The primary structure comprises 208 residues: FMN-dependent NADH:quinone oxidoreductase (208 aa).

Residues histidine 10, 17–19, 104–107, 148–153, and aspartate 184 each bind FMN; these read SRS, MWNL, and SNGGFY.

The protein belongs to the azoreductase type 1 family. As to quaternary structure, homodimer. FMN serves as cofactor.

The enzyme catalyses 2 a quinone + NADH + H(+) = 2 a 1,4-benzosemiquinone + NAD(+). The catalysed reaction is N,N-dimethyl-1,4-phenylenediamine + anthranilate + 2 NAD(+) = 2-(4-dimethylaminophenyl)diazenylbenzoate + 2 NADH + 2 H(+). Quinone reductase that provides resistance to thiol-specific stress caused by electrophilic quinones. Its function is as follows. Also exhibits azoreductase activity. Catalyzes the reductive cleavage of the azo bond in aromatic azo compounds to the corresponding amines. Requires NADH, but not NADPH, as an electron donor for its activity. The enzyme can also reduce a wide range of sulfonated azo dyes. The substrate preference order is methyl Red &gt; Orange II &gt; Ponceau BS &gt; Ponceau S &gt; Orange G &gt; Amaranth. The sequence is that of FMN-dependent NADH:quinone oxidoreductase from Enterococcus faecalis (strain ATCC 700802 / V583).